We begin with the raw amino-acid sequence, 117 residues long: Histone H1-like protein HC1 (117 aa).

Positions 57 to 117 (EKSGLMTRKP…KSSKSRYLRK (61 aa)) are disordered. Over residues 66–81 (PATKAKKAAATKKAAP) the composition is skewed to basic residues. Over residues 82–94 (KPKIQAKAAPKAK) the composition is skewed to low complexity. Basic residues predominate over residues 95–117 (ATTKKTPAKAKAKKSSKSRYLRK).

Belongs to the histone H1/H5 family. HCT subfamily.

Might have a role analogous to that of eukaryotic histone proteins. The polypeptide is Histone H1-like protein HC1 (hctA) (Chlamydia psittaci (Chlamydophila psittaci)).